The following is a 393-amino-acid chain: Purine permease 14 (393 aa).

Ala-2 is subject to N-acetylalanine. 10 helical membrane passes run 46–66 (WPTI…AKLL), 90–110 (TQSL…LIFI), 133–153 (LAVI…LAAM), 161–181 (GVFT…AAFI), 189–209 (WVVI…SSSF), 225–245 (WAAL…QNVF), 268–288 (VIIF…LIAG), 308–328 (VMAM…IVGL), 339–359 (VISV…FNFM), and 363–383 (FDAF…AYFF).

Belongs to the purine permeases (TC 2.A.7.14) family. Expressed in seedlings, leaves, embryos, ovules, seeds and the root and shoot meristems. In heart-stage embryos, detected in cells that failed to respond to cytokinins, including the prospective cotyledons.

Its subcellular location is the cell membrane. In terms of biological role, purine permease implicated in ATP-dependent cytokinin translocation that controls the spatiotemporal landscape of cytokinin signaling. Depletes ligands from the apoplast, which leads to a suppression of the cytokinin response. This chain is Purine permease 14, found in Arabidopsis thaliana (Mouse-ear cress).